Consider the following 122-residue polypeptide: S-adenosylmethionine decarboxylase proenzyme (122 aa).

Serine 63 acts as the Schiff-base intermediate with substrate; via pyruvic acid in catalysis. At serine 63 the chain carries Pyruvic acid (Ser); by autocatalysis. Histidine 68 (proton acceptor; for processing activity) is an active-site residue. Cysteine 83 (proton donor; for catalytic activity) is an active-site residue.

It belongs to the prokaryotic AdoMetDC family. Type 1 subfamily. In terms of assembly, heterotetramer of two alpha and two beta chains arranged as a dimer of alpha/beta heterodimers. Requires pyruvate as cofactor. In terms of processing, is synthesized initially as an inactive proenzyme. Formation of the active enzyme involves a self-maturation process in which the active site pyruvoyl group is generated from an internal serine residue via an autocatalytic post-translational modification. Two non-identical subunits are generated from the proenzyme in this reaction, and the pyruvate is formed at the N-terminus of the alpha chain, which is derived from the carboxyl end of the proenzyme. The post-translation cleavage follows an unusual pathway, termed non-hydrolytic serinolysis, in which the side chain hydroxyl group of the serine supplies its oxygen atom to form the C-terminus of the beta chain, while the remainder of the serine residue undergoes an oxidative deamination to produce ammonia and the pyruvoyl group blocking the N-terminus of the alpha chain.

It carries out the reaction S-adenosyl-L-methionine + H(+) = S-adenosyl 3-(methylsulfanyl)propylamine + CO2. It functions in the pathway amine and polyamine biosynthesis; S-adenosylmethioninamine biosynthesis; S-adenosylmethioninamine from S-adenosyl-L-methionine: step 1/1. Catalyzes the decarboxylation of S-adenosylmethionine to S-adenosylmethioninamine (dcAdoMet), the propylamine donor required for the synthesis of the polyamines spermine and spermidine from the diamine putrescine. In Methanococcus vannielii (strain ATCC 35089 / DSM 1224 / JCM 13029 / OCM 148 / SB), this protein is S-adenosylmethionine decarboxylase proenzyme.